The primary structure comprises 407 residues: GTPase Obg (407 aa).

An Obg domain is found at 1-159; that stretch reads MKFVDEVSIR…RDLKMEMKVL (159 aa). The interval 127-150 is disordered; sequence NTRFKSSTNRAPRQTTPGKPGDQR. The span at 129 to 143 shows a compositional bias: polar residues; the sequence is RFKSSTNRAPRQTTP. The 174-residue stretch at 160–333 folds into the OBG-type G domain; the sequence is ADVGLLGLPN…LSHDLMRYLE (174 aa). GTP contacts are provided by residues 166-173, 191-195, 213-216, 283-286, and 314-316; these read GLPNAGKS, FTTLV, DIPG, NKAD, and SAI. Mg(2+) contacts are provided by Ser-173 and Thr-193. The interval 378 to 407 is disordered; it reads VKSVHDIGDDDDWDDFEDDEDGPEIIYVRD. Residues 385–400 show a composition bias toward acidic residues; that stretch reads GDDDDWDDFEDDEDGP.

It belongs to the TRAFAC class OBG-HflX-like GTPase superfamily. OBG GTPase family. As to quaternary structure, monomer. Mg(2+) serves as cofactor.

Its subcellular location is the cytoplasm. An essential GTPase which binds GTP, GDP and possibly (p)ppGpp with moderate affinity, with high nucleotide exchange rates and a fairly low GTP hydrolysis rate. Plays a role in control of the cell cycle, stress response, ribosome biogenesis and in those bacteria that undergo differentiation, in morphogenesis control. This is GTPase Obg from Pseudomonas entomophila (strain L48).